A 162-amino-acid chain; its full sequence is Phosphopantetheine adenylyltransferase (162 aa).

Residue Thr-10 participates in substrate binding. ATP-binding positions include 10–11 and His-18; that span reads TF. Positions 42, 74, and 88 each coordinate substrate. ATP-binding positions include 89–91, Glu-99, and 124–130; these read GLR and FSCISST.

This sequence belongs to the bacterial CoaD family. In terms of assembly, homohexamer. The cofactor is Mg(2+).

It is found in the cytoplasm. The enzyme catalyses (R)-4'-phosphopantetheine + ATP + H(+) = 3'-dephospho-CoA + diphosphate. It participates in cofactor biosynthesis; coenzyme A biosynthesis; CoA from (R)-pantothenate: step 4/5. Reversibly transfers an adenylyl group from ATP to 4'-phosphopantetheine, yielding dephospho-CoA (dPCoA) and pyrophosphate. The sequence is that of Phosphopantetheine adenylyltransferase from Francisella tularensis subsp. mediasiatica (strain FSC147).